The sequence spans 723 residues: Catalase-peroxidase (723 aa).

A cross-link (tryptophyl-tyrosyl-methioninium (Trp-Tyr) (with M-252)) is located at residues 98–226; it reads WHSAGSYRVG…LAAVMMGLIY (129 aa). His99 serves as the catalytic Proton acceptor. The tryptophyl-tyrosyl-methioninium (Tyr-Met) (with W-98) cross-link spans 226 to 252; the sequence is YVNPEGVDGNPDPLKTAKDMRVTFARM. His267 contacts heme b.

Belongs to the peroxidase family. Peroxidase/catalase subfamily. As to quaternary structure, homodimer or homotetramer. Requires heme b as cofactor. Post-translationally, formation of the three residue Trp-Tyr-Met cross-link is important for the catalase, but not the peroxidase activity of the enzyme.

It carries out the reaction H2O2 + AH2 = A + 2 H2O. The enzyme catalyses 2 H2O2 = O2 + 2 H2O. In terms of biological role, bifunctional enzyme with both catalase and broad-spectrum peroxidase activity. In Vibrio vulnificus (strain CMCP6), this protein is Catalase-peroxidase.